Consider the following 216-residue polypeptide: Nucleoside triphosphate pyrophosphatase (216 aa).

The active-site Proton acceptor is D82.

It belongs to the Maf family. The cofactor is a divalent metal cation.

Its subcellular location is the cytoplasm. It carries out the reaction a ribonucleoside 5'-triphosphate + H2O = a ribonucleoside 5'-phosphate + diphosphate + H(+). The catalysed reaction is a 2'-deoxyribonucleoside 5'-triphosphate + H2O = a 2'-deoxyribonucleoside 5'-phosphate + diphosphate + H(+). Its function is as follows. Nucleoside triphosphate pyrophosphatase. May have a dual role in cell division arrest and in preventing the incorporation of modified nucleotides into cellular nucleic acids. In Mycobacterium ulcerans (strain Agy99), this protein is Nucleoside triphosphate pyrophosphatase.